The sequence spans 504 residues: Maturase K (504 aa).

Belongs to the intron maturase 2 family. MatK subfamily.

The protein localises to the plastid. It is found in the chloroplast. In terms of biological role, usually encoded in the trnK tRNA gene intron. Probably assists in splicing its own and other chloroplast group II introns. This is Maturase K from Kokia drynarioides (Hawaiian tree cotton).